The chain runs to 170 residues: Protein-export protein SecB (170 aa).

The protein belongs to the SecB family. In terms of assembly, homotetramer, a dimer of dimers. One homotetramer interacts with 1 SecA dimer.

It localises to the cytoplasm. One of the proteins required for the normal export of preproteins out of the cell cytoplasm. It is a molecular chaperone that binds to a subset of precursor proteins, maintaining them in a translocation-competent state. It also specifically binds to its receptor SecA. The protein is Protein-export protein SecB of Pasteurella multocida (strain Pm70).